Consider the following 432-residue polypeptide: Uracil permease (432 aa).

Helical transmembrane passes span 25–45 (LFAMFGATILVPYLVGLDPSI), 65–85 (VPAYLGSSFAYIAPIIAAKTA), 89–109 (GAAMIGSFLAGLVYGVVALII), 124–144 (VVVGPVIIVIGLGLAGTAVGM), 155–175 (LLHFSVALVTLAATIVCSVLA), 181–201 (LIPVLVGIVVGYLYALAVGLV), 206–226 (VAAAKWFEWPDFLIPFADYPV), 228–248 (VTWEIVMLMVPVAIVTLSEHI), 305–325 (VYSVYVLAGAAVIAIAFGFVG), 330–350 (LISSIPTPVMGGVSILLFGII), 370–390 (NLVIASVILVIGIGGAVLKIS), and 393–413 (FQITGMALSAIVGVLLNLILP).

Belongs to the nucleobase:cation symporter-2 (NCS2) (TC 2.A.40) family.

Its subcellular location is the cell membrane. Its function is as follows. Transport of uracil in the cell. The chain is Uracil permease (pyrP) from Bacillus caldolyticus.